A 194-amino-acid polypeptide reads, in one-letter code: Peptidyl-tRNA hydrolase (194 aa).

Tyrosine 17 is a binding site for tRNA. Histidine 22 (proton acceptor) is an active-site residue. TRNA contacts are provided by tyrosine 68, asparagine 70, and asparagine 116.

This sequence belongs to the PTH family. Monomer.

The protein localises to the cytoplasm. It carries out the reaction an N-acyl-L-alpha-aminoacyl-tRNA + H2O = an N-acyl-L-amino acid + a tRNA + H(+). In terms of biological role, hydrolyzes ribosome-free peptidyl-tRNAs (with 1 or more amino acids incorporated), which drop off the ribosome during protein synthesis, or as a result of ribosome stalling. Its function is as follows. Catalyzes the release of premature peptidyl moieties from peptidyl-tRNA molecules trapped in stalled 50S ribosomal subunits, and thus maintains levels of free tRNAs and 50S ribosomes. The protein is Peptidyl-tRNA hydrolase of Pseudoalteromonas translucida (strain TAC 125).